A 291-amino-acid polypeptide reads, in one-letter code: ATP synthase gamma chain (291 aa).

The protein belongs to the ATPase gamma chain family. F-type ATPases have 2 components, CF(1) - the catalytic core - and CF(0) - the membrane proton channel. CF(1) has five subunits: alpha(3), beta(3), gamma(1), delta(1), epsilon(1). CF(0) has three main subunits: a, b and c.

It localises to the cell membrane. Produces ATP from ADP in the presence of a proton gradient across the membrane. The gamma chain is believed to be important in regulating ATPase activity and the flow of protons through the CF(0) complex. This Streptococcus pyogenes serotype M49 (strain NZ131) protein is ATP synthase gamma chain.